A 76-amino-acid polypeptide reads, in one-letter code: Serine palmitoyltransferase small subunit B (76 aa).

Over 1-11 (MDFKRVKEYFA) the chain is Cytoplasmic. A helical transmembrane segment spans residues 12 to 29 (WLYYQYQIITCCAVMEPW). The Lumenal portion of the chain corresponds to 30-36 (EQSMLNT). A helical transmembrane segment spans residues 37–57 (IILTIVAMVVYTAYVFIPIHI). Topologically, residues 58 to 76 (RLAWEFFSKICGYDSSISN) are cytoplasmic.

This sequence belongs to the SPTSS family. SPTSSB subfamily. In terms of assembly, component of the serine palmitoyltransferase (SPT) complex, which is composed of SPTLC1, SPTLC2 or SPTLC3 and SPTSSA or SPTSSB. The heterodimer consisting of SPTLC1 and SPTLC2/SPTLC3 forms the catalytic core of the enzyme, while SPTSSA or SPTSSB subunits determine substrate specificity. SPT also interacts with ORMDL proteins, especially ORMDL3, which negatively regulate SPT activity in the presence of ceramides. As to expression, expression is strong in hypogonadal (hpg) mouse prostate, weak in mature castrated mouse prostate and absent in normal intact or androgen-replaced hpg mouse prostates.

It is found in the endoplasmic reticulum membrane. It functions in the pathway lipid metabolism; sphingolipid metabolism. In terms of biological role, component of the serine palmitoyltransferase multisubunit enzyme (SPT) that catalyzes the initial and rate-limiting step in sphingolipid biosynthesis by condensing L-serine and activated acyl-CoA (most commonly palmitoyl-CoA) to form long-chain bases. The SPT complex is composed of SPTLC1, SPTLC2 or SPTLC3 and SPTSSA or SPTSSB. Within this complex, the heterodimer consisting of SPTLC1 and SPTLC2/SPTLC3 forms the catalytic core. Within the SPT complex, SPTSSB stimulates the catalytic activity and plays a role in substrate specificity. SPT complexes with this subunit showing a preference for longer acyl-CoAs. The SPTLC1-SPTLC2-SPTSSB complex shows a strong preference for C18-CoA substrate, while the SPTLC1-SPTLC3-SPTSSB isozyme displays an ability to use a broader range of acyl-CoAs, without apparent preference. The chain is Serine palmitoyltransferase small subunit B (Sptssb) from Mus musculus (Mouse).